The primary structure comprises 364 residues: MKLSVLVVTLLAVSWTSAQPETFSIQTKEANMNPEPANIRVARSSSAQSNLQWNYWDGQGAVPDGAVSIWNGEEKRTDYVCSCGCSSGFYSTKTGANCHYAYGETEKTCSGFSILVNRDNFENLEWKGGSDGSVPKNAVEVCEKVYVGKNKYGLGKVHTKHEALFLPWHGEEHWYKDYEVLTVNDDVVKQELTQVNYKLDAAHPIKNPPETLRRSSASNSQCRPITKTVALEKAIQTEQSWDVTSTVTFGVESSITAGIPDIASATVSVSVETSLSVSLGSTTTKTTTHTVSVIVTVPPNHYCPVTMVATKYTADIPFTGKMTRTYRNGQKRTTSITGTYRAIQVGEIRADVQRCSEIAGAKPC.

Residues 1–18 (MKLSVLVVTLLAVSWTSA) form the signal peptide. Residues 19–42 (QPETFSIQTKEANMNPEPANIRVA) constitute a propeptide that is removed on maturation.

Belongs to the natterin family. Post-translationally, contains 4 disulfide bonds. Expressed by the venom gland.

Its subcellular location is the secreted. Inhibited by tissue-kallikrein inhibitor TKI and trasylol. Plasma kallikrein inhibitor PKSI527 and classical inhibitors of serine-, metallo-, thiol- or aspartate-peptidases evokes a minor inhibition of the peptide digestion. Shows nociceptive, edema-inducing and kininogenase activity with release of kallidin from low molecular weight kininogen. The cleavage occurs at Met-Lys bonds. The polypeptide is Natterin-3 (Thalassophryne nattereri (Copper Joe toadfish)).